The following is a 217-amino-acid chain: Probable transaldolase (217 aa).

The active-site Schiff-base intermediate with substrate is Lys83.

It belongs to the transaldolase family. Type 3B subfamily.

Its subcellular location is the cytoplasm. The enzyme catalyses D-sedoheptulose 7-phosphate + D-glyceraldehyde 3-phosphate = D-erythrose 4-phosphate + beta-D-fructose 6-phosphate. Its pathway is carbohydrate degradation; pentose phosphate pathway; D-glyceraldehyde 3-phosphate and beta-D-fructose 6-phosphate from D-ribose 5-phosphate and D-xylulose 5-phosphate (non-oxidative stage): step 2/3. In terms of biological role, transaldolase is important for the balance of metabolites in the pentose-phosphate pathway. The sequence is that of Probable transaldolase from Clostridium botulinum (strain Loch Maree / Type A3).